A 345-amino-acid chain; its full sequence is Fe-S cluster assembly protein DRE2 (345 aa).

The interval 29–163 (GDSGDRTLLL…KPDYAEQEVV (135 aa)) is N-terminal SAM-like domain. Residues 164-237 (PLRFGAKKVN…EDTLLTEADL (74 aa)) form a linker region. Cysteine 247, cysteine 258, cysteine 261, and cysteine 263 together coordinate [2Fe-2S] cluster. A fe-S binding site A region spans residues 247-263 (CAPQPGKKRRACKDCTC). The [4Fe-4S] cluster site is built by cysteine 308, cysteine 311, cysteine 319, and cysteine 322. 2 short sequence motifs (cx2C motif) span residues 308-311 (CNSC) and 319-322 (CADC). Residues 308–322 (CNSCYLGDAFRCADC) are fe-S binding site B.

It belongs to the anamorsin family. As to quaternary structure, monomer. Interacts with TAH18. Interacts with MIA40. [2Fe-2S] cluster is required as a cofactor. [4Fe-4S] cluster serves as cofactor.

The protein localises to the cytoplasm. Its subcellular location is the mitochondrion intermembrane space. Its function is as follows. Component of the cytosolic iron-sulfur (Fe-S) protein assembly (CIA) machinery required for the maturation of extramitochondrial Fe-S proteins. Part of an electron transfer chain functioning in an early step of cytosolic Fe-S biogenesis, facilitating the de novo assembly of a [4Fe-4S] cluster on the scaffold complex CFD1-NBP35. Electrons are transferred to DRE2 from NADPH via the FAD- and FMN-containing protein TAH18. TAH18-DRE2 are also required for the assembly of the diferric tyrosyl radical cofactor of ribonucleotide reductase (RNR), probably by providing electrons for reduction during radical cofactor maturation in the catalytic small subunit RNR2. This is Fe-S cluster assembly protein DRE2 from Podospora anserina (strain S / ATCC MYA-4624 / DSM 980 / FGSC 10383) (Pleurage anserina).